The sequence spans 407 residues: Inactive non-canonical poly(A) RNA polymerase protein Trf4-2 (407 aa).

Mg(2+)-binding residues include Asp85 and Asp87. Positions 221–280 (LALLLIQFLDYYGRKFDFFKYGISVLGQGGCVEKARLRSTLGENNWQSVLCIEDPVTPTN) constitute a PAP-associated domain. The disordered stretch occupies residues 354–390 (LVQPSPTGSTSPSASASASEDERSGGPATIGFGRCDD). Positions 357–371 (PSPTGSTSPSASASA) are enriched in low complexity.

The protein belongs to the DNA polymerase type-B-like family.

This is Inactive non-canonical poly(A) RNA polymerase protein Trf4-2 from Drosophila melanogaster (Fruit fly).